A 362-amino-acid chain; its full sequence is Protein OCA4 (362 aa).

In terms of biological role, required for replication of Brome mosaic virus (BMV). This is Protein OCA4 (OCA4) from Saccharomyces cerevisiae (strain ATCC 204508 / S288c) (Baker's yeast).